Consider the following 468-residue polypeptide: Cysteine--tRNA ligase (468 aa).

Cys28 is a Zn(2+) binding site. The 'HIGH' region motif lies at 30-40 (PTVYNYIHIGN). Zn(2+) contacts are provided by Cys212, His237, and Glu241. The 'KMSKS' region motif lies at 271-275 (KMSKS). Residue Lys274 participates in ATP binding.

The protein belongs to the class-I aminoacyl-tRNA synthetase family. In terms of assembly, monomer. The cofactor is Zn(2+).

It localises to the cytoplasm. The enzyme catalyses tRNA(Cys) + L-cysteine + ATP = L-cysteinyl-tRNA(Cys) + AMP + diphosphate. The protein is Cysteine--tRNA ligase of Latilactobacillus sakei subsp. sakei (strain 23K) (Lactobacillus sakei subsp. sakei).